The chain runs to 237 residues: Pyridoxal phosphate homeostasis protein (237 aa).

An N6-(pyridoxal phosphate)lysine modification is found at lysine 31.

Belongs to the pyridoxal phosphate-binding protein YggS/PROSC family.

The protein resides in the cytoplasm. It is found in the nucleus. Pyridoxal 5'-phosphate (PLP)-binding protein, which may be involved in intracellular homeostatic regulation of pyridoxal 5'-phosphate (PLP), the active form of vitamin B6. The chain is Pyridoxal phosphate homeostasis protein from Schizosaccharomyces pombe (strain 972 / ATCC 24843) (Fission yeast).